Reading from the N-terminus, the 240-residue chain is UDP-2,3-diacylglucosamine hydrolase (240 aa).

Residues Asp-8, His-10, Asp-41, Asn-79, and His-114 each coordinate Mn(2+). 79 to 80 (NR) lines the substrate pocket. Asp-122, Ser-160, Asn-164, Lys-167, and His-195 together coordinate substrate. 2 residues coordinate Mn(2+): His-195 and His-197.

Belongs to the LpxH family. Requires Mn(2+) as cofactor.

It localises to the cell inner membrane. The catalysed reaction is UDP-2-N,3-O-bis[(3R)-3-hydroxytetradecanoyl]-alpha-D-glucosamine + H2O = 2-N,3-O-bis[(3R)-3-hydroxytetradecanoyl]-alpha-D-glucosaminyl 1-phosphate + UMP + 2 H(+). The protein operates within glycolipid biosynthesis; lipid IV(A) biosynthesis; lipid IV(A) from (3R)-3-hydroxytetradecanoyl-[acyl-carrier-protein] and UDP-N-acetyl-alpha-D-glucosamine: step 4/6. Hydrolyzes the pyrophosphate bond of UDP-2,3-diacylglucosamine to yield 2,3-diacylglucosamine 1-phosphate (lipid X) and UMP by catalyzing the attack of water at the alpha-P atom. Involved in the biosynthesis of lipid A, a phosphorylated glycolipid that anchors the lipopolysaccharide to the outer membrane of the cell. This chain is UDP-2,3-diacylglucosamine hydrolase, found in Yersinia pseudotuberculosis serotype O:1b (strain IP 31758).